The primary structure comprises 50 residues: Protein PsbN (50 aa).

The helical transmembrane segment at 14–34 (VAVTILAVLLALTGFGLWTAF) threads the bilayer.

Belongs to the PsbN family.

The protein localises to the cellular thylakoid membrane. Functionally, may play a role in photosystem I and II biogenesis. The protein is Protein PsbN of Prochlorococcus marinus subsp. pastoris (strain CCMP1986 / NIES-2087 / MED4).